The following is a 62-amino-acid chain: uncharacterized protein (62 aa).

Residues 1 to 18 show a composition bias toward polar residues; the sequence is MTTNRVDPLEQTSPNTPT. The disordered stretch occupies residues 1–24; the sequence is MTTNRVDPLEQTSPNTPTSKREKA.

This is an uncharacterized protein from Rickettsia conorii (strain ATCC VR-613 / Malish 7).